We begin with the raw amino-acid sequence, 368 residues long: UDP-N-acetylglucosamine--N-acetylmuramyl-(pentapeptide) pyrophosphoryl-undecaprenol N-acetylglucosamine transferase (368 aa).

Residues 10-12, N126, S200, I255, and Q300 each bind UDP-N-acetyl-alpha-D-glucosamine; that span reads TGG.

Belongs to the glycosyltransferase 28 family. MurG subfamily.

Its subcellular location is the cell membrane. The catalysed reaction is Mur2Ac(oyl-L-Ala-gamma-D-Glu-L-Lys-D-Ala-D-Ala)-di-trans,octa-cis-undecaprenyl diphosphate + UDP-N-acetyl-alpha-D-glucosamine = beta-D-GlcNAc-(1-&gt;4)-Mur2Ac(oyl-L-Ala-gamma-D-Glu-L-Lys-D-Ala-D-Ala)-di-trans,octa-cis-undecaprenyl diphosphate + UDP + H(+). It functions in the pathway cell wall biogenesis; peptidoglycan biosynthesis. Its function is as follows. Cell wall formation. Catalyzes the transfer of a GlcNAc subunit on undecaprenyl-pyrophosphoryl-MurNAc-pentapeptide (lipid intermediate I) to form undecaprenyl-pyrophosphoryl-MurNAc-(pentapeptide)GlcNAc (lipid intermediate II). This is UDP-N-acetylglucosamine--N-acetylmuramyl-(pentapeptide) pyrophosphoryl-undecaprenol N-acetylglucosamine transferase from Lactobacillus helveticus (strain DPC 4571).